The following is a 448-amino-acid chain: MTLPAFKAYDIRGRVPDELNEDLARRIGVALAAQLDQGPVVLGHDVRLASPALQEALSAGLRASGREVIDIGLCGTEEVYFQTDHLKAAGGVMVTASHNPMDYNGMKLVREQARPISSDTGLFAIRDTVAADTAAAGEPTAAEHSRTDKTAYLEHLLSYVDRSTLKPLKLVVNAGNGGAGLIVDLLAPHLPFEFVRVFHEPDGNFPNGIPNPLLPENRDATAKAVKEHGADFGIAWDGDFDRCFFFDHTGRFIEGYYLVGLLAQAILAKQPGGKVVHDPRLTWNTVEMVEDAGGIPVLCKSGHAFIKEKMRSENAVYGGEMSAHHYFREFAYADSGMIPWLLIAELVSQSGRSLADLVEARMQKFPCSGEINFKVDDAKAAVARVMAHYGDQSPELDYTDGISADFGQWRFNLRSSNTEPLLRLNVETRGDAALLETRTQEISNLLRG.

The active-site Phosphoserine intermediate is Ser97. Mg(2+)-binding residues include Ser97, Asp237, Asp239, and Asp241.

It belongs to the phosphohexose mutase family. Mg(2+) is required as a cofactor.

It carries out the reaction alpha-D-glucose 1-phosphate = alpha-D-glucose 6-phosphate. The catalysed reaction is alpha-D-mannose 1-phosphate = D-mannose 6-phosphate. Its pathway is nucleotide-sugar biosynthesis; GDP-alpha-D-mannose biosynthesis; alpha-D-mannose 1-phosphate from D-fructose 6-phosphate: step 2/2. Functionally, involved in xanthan production. In Xanthomonas campestris pv. campestris (strain ATCC 33913 / DSM 3586 / NCPPB 528 / LMG 568 / P 25), this protein is Phosphohexose mutases (xanA).